Reading from the N-terminus, the 574-residue chain is Isocitrate dehydrogenase kinase/phosphatase (574 aa).

Residues 311-317 (APGIRGM) and K332 contribute to the ATP site. D367 is an active-site residue.

The protein belongs to the AceK family.

The protein localises to the cytoplasm. The enzyme catalyses L-seryl-[isocitrate dehydrogenase] + ATP = O-phospho-L-seryl-[isocitrate dehydrogenase] + ADP + H(+). Functionally, bifunctional enzyme which can phosphorylate or dephosphorylate isocitrate dehydrogenase (IDH) on a specific serine residue. This is a regulatory mechanism which enables bacteria to bypass the Krebs cycle via the glyoxylate shunt in response to the source of carbon. When bacteria are grown on glucose, IDH is fully active and unphosphorylated, but when grown on acetate or ethanol, the activity of IDH declines drastically concomitant with its phosphorylation. The polypeptide is Isocitrate dehydrogenase kinase/phosphatase (Shigella boydii serotype 4 (strain Sb227)).